Consider the following 485-residue polypeptide: Glutamate--tRNA ligase (485 aa).

The 'HIGH' region signature appears at 10-20 (PSPTGHLHIGN). The 'KMSKS' region signature appears at 253–257 (KLSKR). Lys-256 is an ATP binding site.

The protein belongs to the class-I aminoacyl-tRNA synthetase family. Glutamate--tRNA ligase type 1 subfamily. In terms of assembly, monomer.

It is found in the cytoplasm. The enzyme catalyses tRNA(Glu) + L-glutamate + ATP = L-glutamyl-tRNA(Glu) + AMP + diphosphate. Catalyzes the attachment of glutamate to tRNA(Glu) in a two-step reaction: glutamate is first activated by ATP to form Glu-AMP and then transferred to the acceptor end of tRNA(Glu). The chain is Glutamate--tRNA ligase from Enterococcus faecalis (strain ATCC 700802 / V583).